Consider the following 143-residue polypeptide: ATP synthase epsilon chain (143 aa).

This sequence belongs to the ATPase epsilon chain family. F-type ATPases have 2 components, CF(1) - the catalytic core - and CF(0) - the membrane proton channel. CF(1) has five subunits: alpha(3), beta(3), gamma(1), delta(1), epsilon(1). CF(0) has three main subunits: a, b and c.

The protein localises to the cell inner membrane. Its function is as follows. Produces ATP from ADP in the presence of a proton gradient across the membrane. The protein is ATP synthase epsilon chain of Dichelobacter nodosus (strain VCS1703A).